A 509-amino-acid chain; its full sequence is ATP synthase subunit alpha (509 aa).

169-176 serves as a coordination point for ATP; sequence GDRKTGKT.

It belongs to the ATPase alpha/beta chains family. As to quaternary structure, F-type ATPases have 2 components, CF(1) - the catalytic core - and CF(0) - the membrane proton channel. CF(1) has five subunits: alpha(3), beta(3), gamma(1), delta(1), epsilon(1). CF(0) has three main subunits: a(1), b(2) and c(9-12). The alpha and beta chains form an alternating ring which encloses part of the gamma chain. CF(1) is attached to CF(0) by a central stalk formed by the gamma and epsilon chains, while a peripheral stalk is formed by the delta and b chains.

It localises to the cell membrane. The enzyme catalyses ATP + H2O + 4 H(+)(in) = ADP + phosphate + 5 H(+)(out). Produces ATP from ADP in the presence of a proton gradient across the membrane. The alpha chain is a regulatory subunit. The sequence is that of ATP synthase subunit alpha from Limosilactobacillus reuteri (strain DSM 20016) (Lactobacillus reuteri).